A 64-amino-acid polypeptide reads, in one-letter code: MFPLKKSLLLLFFLATINLSLCEQERNAEEERRDEPDERNAEVEKRFLPIVGKLLSGLSGLSGK.

The signal sequence occupies residues 1 to 22; it reads MFPLKKSLLLLFFLATINLSLC. The propeptide occupies 23–46; the sequence is EQERNAEEERRDEPDERNAEVEKR. Ser62 carries the serine amide modification.

The protein belongs to the frog skin active peptide (FSAP) family. Temporin subfamily. In terms of tissue distribution, expressed by the skin glands.

It localises to the secreted. Functionally, antimicrobial peptide with activity against Gram-positive and Gram-negative bacteria and against fungi. Has been tested against S.aureus (MIC=2.5 ug/mL), B.pumilus (MIC=7.5 ug/mL), B.cereus (MIC=75.0 ug/mL), E.coli (MIC=5.0 ug/mL), B.dysenteriae (MIC=20.0 ug/mL), A.cacoaceticus (MIC=60.0 ug/mL), P.aeruginosa (MIC=2.5 ug/mL) and C.albicans (MIC=2.5 ug/mL). Also shows a weak hemolytic activity. This is Temporin-ALh from Amolops loloensis (Lolokou Sucker Frog).